Reading from the N-terminus, the 460-residue chain is GTPase Der (460 aa).

EngA-type G domains are found at residues 3-167 (FTFA…PEPD) and 189-364 (IRVA…AVWN). GTP contacts are provided by residues 9–16 (GRPNVGKS), 56–60 (DTAGL), 119–122 (NKSE), 195–202 (GRPNAGKS), 242–246 (DTAGL), and 307–310 (NKWD). One can recognise a KH-like domain in the interval 365-449 (TRVPTAALNR…PVRIMLREKA (85 aa)).

Belongs to the TRAFAC class TrmE-Era-EngA-EngB-Septin-like GTPase superfamily. EngA (Der) GTPase family. As to quaternary structure, associates with the 50S ribosomal subunit.

In terms of biological role, GTPase that plays an essential role in the late steps of ribosome biogenesis. The protein is GTPase Der of Rhodopseudomonas palustris (strain BisB5).